The following is a 161-amino-acid chain: Cytochrome c-type biogenesis protein CcmE (161 aa).

The Cytoplasmic segment spans residues 1 to 8 (MNPRRQKR). The helical; Signal-anchor for type II membrane protein transmembrane segment at 9 to 29 (LGIILAILIGVSATIGLMIYA) threads the bilayer. The Periplasmic segment spans residues 30 to 161 (LNQNMDLFYT…SEEQKQGSGQ (132 aa)). Residues histidine 129 and tyrosine 133 each coordinate heme.

Belongs to the CcmE/CycJ family.

The protein resides in the cell inner membrane. Functionally, heme chaperone required for the biogenesis of c-type cytochromes. Transiently binds heme delivered by CcmC and transfers the heme to apo-cytochromes in a process facilitated by CcmF and CcmH. This Vibrio vulnificus (strain CMCP6) protein is Cytochrome c-type biogenesis protein CcmE.